The chain runs to 318 residues: Porphobilinogen deaminase (318 aa).

An S-(dipyrrolylmethanemethyl)cysteine modification is found at Cys-241.

It belongs to the HMBS family. As to quaternary structure, monomer. It depends on dipyrromethane as a cofactor.

The enzyme catalyses 4 porphobilinogen + H2O = hydroxymethylbilane + 4 NH4(+). It functions in the pathway porphyrin-containing compound metabolism; protoporphyrin-IX biosynthesis; coproporphyrinogen-III from 5-aminolevulinate: step 2/4. Tetrapolymerization of the monopyrrole PBG into the hydroxymethylbilane pre-uroporphyrinogen in several discrete steps. The sequence is that of Porphobilinogen deaminase from Geobacter sulfurreducens (strain ATCC 51573 / DSM 12127 / PCA).